A 763-amino-acid chain; its full sequence is Lysine-specific histone demethylase 1 homolog 2 (763 aa).

An SWIRM domain is found at 53-152; it reads QRETETEALI…FGVSAAFPAS (100 aa). Residues glutamate 192, arginine 194, arginine 200, and glutamate 571 each contribute to the FAD site.

The protein belongs to the flavin monoamine oxidase family. The cofactor is FAD.

Its function is as follows. Probable histone demethylase. The sequence is that of Lysine-specific histone demethylase 1 homolog 2 from Oryza sativa subsp. japonica (Rice).